We begin with the raw amino-acid sequence, 568 residues long: Type 3 secretion system secretin (568 aa).

Positions 1 to 15 are cleaved as a signal peptide; sequence MAAALLLWTAGTVCA. Residues 203 to 292 are disordered; that stretch reads YGGDGPSDSG…RGSTPIIRAD (90 aa). Residues 243-257 are compositionally biased toward gly residues; sequence LGGGKSPLPPGGTGQ. Residues 273-284 show a composition bias toward basic and acidic residues; that stretch reads NRLRSDELDDRG.

It belongs to the bacterial secretin family. T3SS SctC subfamily. The core secretion machinery of the T3SS is composed of approximately 20 different proteins, including cytoplasmic components, a base, an export apparatus and a needle. This subunit is part of the base, which anchors the injectisome in the bacterial cell envelope. Forms a stable homooligomeric complex.

It localises to the cell outer membrane. Its function is as follows. Component of the type III secretion system (T3SS), also called injectisome, which is used to inject bacterial effector proteins into eukaryotic host cells. Forms a ring-shaped multimeric structure with an apparent central pore in the outer membrane. The protein is Type 3 secretion system secretin of Ralstonia nicotianae (strain ATCC BAA-1114 / GMI1000) (Ralstonia solanacearum).